The sequence spans 312 residues: Aldehyde reductase YPR1 (312 aa).

Catalysis depends on tyrosine 56, which acts as the Proton donor. Histidine 112 is a binding site for substrate. 220–274 provides a ligand contact to NADP(+); that stretch reads SPFGSANAPLLKEQAIIDMAKKHGVEPAQLIISWSIQRGYVVLAKSVNPERIVSN.

Belongs to the aldo/keto reductase family.

The protein localises to the cytoplasm. The enzyme catalyses a primary alcohol + NADP(+) = an aldehyde + NADPH + H(+). It carries out the reaction 2-methylbutan-1-ol + NADP(+) = 2-methylbutanal + NADPH + H(+). The catalysed reaction is hexan-1-ol + NADP(+) = hexanal + NADPH + H(+). Aldehyde reductase with broad substrate specificity, catalyzing the NADPH-dependent reduction of aldehydes into the corresponding alcohols. In vitro, displays high specific activity towards 2-methylbutanal (2-methylbutyraldehyde), as well as other aldehydes such as hexanal (a toxic lipid peroxidation product and phytoalexin), but exhibits extremely low activity as a glycerol dehydrogenase. Seems to contribute to 2-methylbutanal reduction in vivo, and may therefore play a role in isoleucine catabolism and fusel alcohol formation. This is Aldehyde reductase YPR1 (YPR1) from Saccharomyces cerevisiae (strain ATCC 204508 / S288c) (Baker's yeast).